The following is a 240-amino-acid chain: MRLGVNIDHVATIREARKTFEPSVLEAAFIAKRAGAHQITMHLREDRRHIKDEDVRLVRTSVEIPLNLEMAPTQEIKTIALEIKPQRVTLVPEKRQEVTTEGGLDILSNADYLKNYIKDFKENQIEVSFFIDPDLGQVEASKFTGADAIELHTGRFAESFHKRDFRLLEEEKNRLRKAATLARELGLNVYAGHGITYQNIHLILDLKGLIEELNIGHSIISNAVLFGLEKAITKMLGIIS.

Asn6 serves as a coordination point for 3-amino-2-oxopropyl phosphate. 8–9 (DH) serves as a coordination point for 1-deoxy-D-xylulose 5-phosphate. Arg17 contacts 3-amino-2-oxopropyl phosphate. His42 (proton acceptor) is an active-site residue. 1-deoxy-D-xylulose 5-phosphate-binding residues include Arg44 and His49. Catalysis depends on Glu69, which acts as the Proton acceptor. Residue Thr99 coordinates 1-deoxy-D-xylulose 5-phosphate. Residue His193 is the Proton donor of the active site. 3-amino-2-oxopropyl phosphate contacts are provided by residues Gly194 and 216 to 217 (GH).

This sequence belongs to the PNP synthase family. Homooctamer; tetramer of dimers.

It is found in the cytoplasm. It carries out the reaction 3-amino-2-oxopropyl phosphate + 1-deoxy-D-xylulose 5-phosphate = pyridoxine 5'-phosphate + phosphate + 2 H2O + H(+). The protein operates within cofactor biosynthesis; pyridoxine 5'-phosphate biosynthesis; pyridoxine 5'-phosphate from D-erythrose 4-phosphate: step 5/5. In terms of biological role, catalyzes the complicated ring closure reaction between the two acyclic compounds 1-deoxy-D-xylulose-5-phosphate (DXP) and 3-amino-2-oxopropyl phosphate (1-amino-acetone-3-phosphate or AAP) to form pyridoxine 5'-phosphate (PNP) and inorganic phosphate. The sequence is that of Pyridoxine 5'-phosphate synthase from Hydrogenobaculum sp. (strain Y04AAS1).